Consider the following 2485-residue polypeptide: Probable polyketide synthase 10 (2485 aa).

Residues 8-447 (EDDIAIIGVG…GANCCIILSE (440 aa)) enclose the Ketosynthase family 3 (KS3) domain. Active-site for beta-ketoacyl synthase activity residues include cysteine 184, histidine 325, and histidine 363. The interval 636–669 (GIEASFIVGHSLGEISAAHCSGMIDLETLCYIIY) is acyl/malonyl transferase. The active-site For acyl/malonyl transferase activity is the serine 646. The tract at residues 930-1054 (PPITILGNES…GNFHISNNLF (125 aa)) is N-terminal hotdog fold. Residues 930-1220 (PPITILGNES…SKSLTPIQDP (291 aa)) enclose the PKS/mFAS DH domain. The active-site Proton acceptor; for dehydratase activity is the histidine 964. The interval 1071-1220 (NYSLIERDDL…SKSLTPIQDP (150 aa)) is C-terminal hotdog fold. The Proton donor; for dehydratase activity role is filled by aspartate 1134. The region spanning 2410-2485 (ESNKGIDGLL…NQLIKFLNKK (76 aa)) is the Carrier domain. Serine 2447 is subject to O-(pantetheine 4'-phosphoryl)serine.

It depends on pantetheine 4'-phosphate as a cofactor.

In terms of biological role, probable polyketide synthase. The sequence is that of Probable polyketide synthase 10 (pks10) from Dictyostelium discoideum (Social amoeba).